The primary structure comprises 351 residues: Ribosomal RNA large subunit methyltransferase N (351 aa).

Catalysis depends on Glu92, which acts as the Proton acceptor. The Radical SAM core domain maps to 105-337 (GHPRSTICVS…CTVRVEKGTE (233 aa)). A disulfide bridge links Cys112 with Cys342. Positions 119, 123, and 126 each coordinate [4Fe-4S] cluster. S-adenosyl-L-methionine contacts are provided by residues 169–170 (GE), Ser201, 224–226 (SLH), and Asn300. Residue Cys342 is the S-methylcysteine intermediate of the active site.

The protein belongs to the radical SAM superfamily. RlmN family. Requires [4Fe-4S] cluster as cofactor.

The protein resides in the cytoplasm. It catalyses the reaction adenosine(2503) in 23S rRNA + 2 reduced [2Fe-2S]-[ferredoxin] + 2 S-adenosyl-L-methionine = 2-methyladenosine(2503) in 23S rRNA + 5'-deoxyadenosine + L-methionine + 2 oxidized [2Fe-2S]-[ferredoxin] + S-adenosyl-L-homocysteine. In terms of biological role, specifically methylates position 2 of adenine 2503 in 23S rRNA. The protein is Ribosomal RNA large subunit methyltransferase N of Nitrosopumilus maritimus (strain SCM1).